The following is a 130-amino-acid chain: C-X-C motif chemokine 5 (130 aa).

The signal sequence occupies residues 1-37 (MSFQLRSSARIPSRSCSSFTLLAFLLLFTLPQHRAQA). 2 disulfide bridges follow: cysteine 50-cysteine 76 and cysteine 52-cysteine 93.

Belongs to the intercrine alpha (chemokine CxC) family. Monomer. Homodimer.

It is found in the secreted. Functionally, may participate in the recruitment of inflammatory cells by injured or infected tissue. This is C-X-C motif chemokine 5 (Cxcl5) from Rattus norvegicus (Rat).